The chain runs to 72 residues: Large ribosomal subunit protein bL31 (72 aa).

Zn(2+) contacts are provided by Cys-17, Cys-19, Cys-37, and Cys-40.

The protein belongs to the bacterial ribosomal protein bL31 family. Type A subfamily. Part of the 50S ribosomal subunit. Zn(2+) serves as cofactor.

Functionally, binds the 23S rRNA. In Clostridium botulinum (strain Loch Maree / Type A3), this protein is Large ribosomal subunit protein bL31.